We begin with the raw amino-acid sequence, 265 residues long: Aquaporin-5 (265 aa).

Residues 1–12 (MKKEVCSLAFFK) are Cytoplasmic-facing. The chain crosses the membrane as a helical span at residues 13–33 (AVFAEFLATLIFVFFGLGSAL). At 34–39 (KWPSAL) the chain is on the extracellular side. Residues 40–60 (PTILQISIAFGLAIGTLAQAL) form a helical membrane-spanning segment. Residues 61-65 (GPVSG) lie on the Cytoplasmic side of the membrane. The segment at residues 66 to 74 (GHINPAITL) is an intramembrane region (discontinuously helical). Residues 69 to 71 (NPA) carry the NPA 1 motif. Over 75–87 (ALLIGNQISLLRA) the chain is Cytoplasmic. A helical membrane pass occupies residues 88–108 (VFYVAAQLVGAIAGAGILYWL). Residues 109–126 (APLNARGNLAVNALNNNT) lie on the Extracellular side of the membrane. N-linked (GlcNAc...) asparagine glycosylation occurs at Asn-124. The chain crosses the membrane as a helical span at residues 127–147 (TPGKAMVVELILTFQLALCIF). Residues 148 to 158 (SSTDSRRTSPV) lie on the Cytoplasmic side of the membrane. A helical membrane pass occupies residues 159–179 (GSPALSIGLSVTLGHLVGIYF). Thr-180 is a topological domain (extracellular). An intramembrane region (discontinuously helical) is located at residues 181–191 (GCSMNPARSFG). The NPA 2 motif lies at 185–187 (NPA). The Extracellular portion of the chain corresponds to 192–203 (PAVVMNRFSPSH). Residues 204-224 (WVFWVGPIVGAMLAAILYFYL) form a helical membrane-spanning segment. Topologically, residues 225–265 (LFPSSLSLHDRVAVVKGTYEPEEDWEDHREERKKTIELTAH) are cytoplasmic.

It belongs to the MIP/aquaporin (TC 1.A.8) family. In terms of assembly, homotetramer; each monomer provides an independent water pore. Interacts with TRPV4; the interaction is probably indirect and regulates TRPV4 activation by hypotonicity. In terms of tissue distribution, salivary glands, lacrimal glands, corneal epithelium in eye, trachea and lung.

The protein localises to the apical cell membrane. It localises to the cell membrane. The protein resides in the cytoplasmic vesicle membrane. It catalyses the reaction H2O(in) = H2O(out). Functionally, aquaporins form homotetrameric transmembrane channels, with each monomer independently mediating water transport across the plasma membrane along its osmotic gradient. Plays an important role in fluid secretion in salivary glands. Required for TRPV4 activation by hypotonicity. Together with TRPV4, controls regulatory volume decrease in salivary epithelial cells. Seems to play a redundant role in water transport in the eye, lung and in sweat glands. In Rattus norvegicus (Rat), this protein is Aquaporin-5.